The following is a 251-amino-acid chain: N-acetylmuramoyl-L-alanine amidase CwlA (251 aa).

Residues 1–37 form the signal peptide; sequence MEIKQMLVPVSRYSVLCPYEMNPTEITFHNTYNDAPA. An N-acetylmuramoyl-L-alanine amidase domain is found at 38-140; it reads INERNNVANN…QERNGKYCPH (103 aa).

Belongs to the N-acetylmuramoyl-L-alanine amidase 2 family.

Its subcellular location is the secreted. It carries out the reaction Hydrolyzes the link between N-acetylmuramoyl residues and L-amino acid residues in certain cell-wall glycopeptides.. Autolysins are involved in some important biological processes such as cell separation, cell-wall turnover, competence for genetic transformation, formation of the flagella and sporulation. This Bacillus sp protein is N-acetylmuramoyl-L-alanine amidase CwlA (cwlA).